The following is a 90-amino-acid chain: Cell division topological specificity factor (90 aa).

It belongs to the MinE family.

Functionally, prevents the cell division inhibition by proteins MinC and MinD at internal division sites while permitting inhibition at polar sites. This ensures cell division at the proper site by restricting the formation of a division septum at the midpoint of the long axis of the cell. In Lachnoclostridium phytofermentans (strain ATCC 700394 / DSM 18823 / ISDg) (Clostridium phytofermentans), this protein is Cell division topological specificity factor.